A 385-amino-acid polypeptide reads, in one-letter code: Leucine aminopeptidase 1 (385 aa).

The N-terminal stretch at M1–A19 is a signal peptide. Positions A20–V87 are excised as a propeptide. N177 carries N-linked (GlcNAc...) asparagine glycosylation. Positions 185 and 204 each coordinate Zn(2+). Residue N229 is glycosylated (N-linked (GlcNAc...) asparagine). Zn(2+) is bound by residues E243 and D270. A disulfide bridge links C319 with C323. A Zn(2+)-binding site is contributed by H352.

Belongs to the peptidase M28 family. M28E subfamily. Monomer. It depends on Zn(2+) as a cofactor.

Its subcellular location is the secreted. In terms of biological role, extracellular aminopeptidase that allows assimilation of proteinaceous substrates. In Blastomyces gilchristii (strain SLH14081) (Blastomyces dermatitidis), this protein is Leucine aminopeptidase 1 (LAP1).